A 267-amino-acid chain; its full sequence is Undecaprenyl-diphosphatase (267 aa).

The next 7 membrane-spanning stretches (helical) occupy residues 4-24 (LYALILGIIEGLTEFLPISST), 41-61 (FWKSFLIIIQLGSILAVIFVF), 69-89 (LDIWLKLAVGFFPTGVIGLFV), 96-116 (LFNGWVVVGMLIFGGVVFILI), 173-193 (AAEFSFLLAIPTMIIATAYSI), 207-227 (IPLGIGFITAFIVAVLVIKFF), and 239-259 (FGIYRIILGFVFFYLYYSGIL).

Belongs to the UppP family.

The protein resides in the cell inner membrane. The catalysed reaction is di-trans,octa-cis-undecaprenyl diphosphate + H2O = di-trans,octa-cis-undecaprenyl phosphate + phosphate + H(+). In terms of biological role, catalyzes the dephosphorylation of undecaprenyl diphosphate (UPP). Confers resistance to bacitracin. The sequence is that of Undecaprenyl-diphosphatase from Campylobacter jejuni subsp. jejuni serotype O:2 (strain ATCC 700819 / NCTC 11168).